We begin with the raw amino-acid sequence, 455 residues long: GTPase Der (455 aa).

EngA-type G domains follow at residues 4-169 and 178-353; these read PIVA…PPKH and IQMA…EQHR. GTP contacts are provided by residues 10 to 17, 57 to 61, 120 to 123, 184 to 191, 231 to 235, and 296 to 299; these read GRPNVGKS, DTGGL, NKCE, DTAGI, and NKWD. In terms of domain architecture, KH-like spans 354–439; that stretch reads RRVSTSVVNE…PLKLFWRGKQ (86 aa).

It belongs to the TRAFAC class TrmE-Era-EngA-EngB-Septin-like GTPase superfamily. EngA (Der) GTPase family. In terms of assembly, associates with the 50S ribosomal subunit.

Its function is as follows. GTPase that plays an essential role in the late steps of ribosome biogenesis. The sequence is that of GTPase Der from Prochlorococcus marinus (strain MIT 9313).